Consider the following 142-residue polypeptide: Mitochondrial import receptor subunit TOM22 homolog (142 aa).

Over residues Met1 to Gly11 the composition is skewed to low complexity. Positions Met1–Leu40 are disordered. Ala2 carries the N-acetylalanine modification. Residues Ala2 to Arg82 are Cytoplasmic-facing. Ser15 is modified (phosphoserine). Residues Lys27–Leu40 show a composition bias toward acidic residues. An import sequence; necessary for mitochondrion outer membrane localization and integration in the TOM complex region spans residues Asp41–Gly50. Position 43 is a phosphothreonine (Thr43). At Ser45 the chain carries Phosphoserine. Residues Ala83–Thr103 traverse the membrane as a helical segment. Residues Ala83 to Thr103 form a TMD; necessary for mitochondrion outer membrane localization and integration in the TOM complex region. The Mitochondrial intermembrane segment spans residues Glu104–Ile142. Positions Pro123–Ile142 are C-tail signal; necessary for mitochondrion outer membrane localization and integration in the TOM complex.

The protein belongs to the Tom22 family. Forms part of the preprotein translocase complex of the outer mitochondrial membrane (TOM complex) which consists of at least 7 different proteins (TOMM5, TOMM6, TOMM7, TOMM20, TOMM22, TOMM40 and TOMM70). Interacts with TOMM40. Interacts with PPP2R2B.

The protein resides in the mitochondrion outer membrane. Central receptor component of the translocase of the outer membrane of mitochondria (TOM complex) responsible for the recognition and translocation of cytosolically synthesized mitochondrial preproteins. Together with the peripheral receptor TOM20 functions as the transit peptide receptor and facilitates the movement of preproteins into the translocation pore. Required for the translocation across the mitochondrial outer membrane of cytochrome P450 monooxygenases. The polypeptide is Mitochondrial import receptor subunit TOM22 homolog (Tomm22) (Rattus norvegicus (Rat)).